The primary structure comprises 62 residues: uncharacterized protein (62 aa).

The tract at residues 38-62 (VKSESDTADSKRSAEAKADEAPAKM) is disordered.

This is an uncharacterized protein from Schizosaccharomyces pombe (strain 972 / ATCC 24843) (Fission yeast).